Consider the following 1706-residue polypeptide: MEAKVPRPRGRPRKRQRLEDDNRKLNNRGKKQVLEVEPAVPISLLGCYMLKDFDDNEVFLGKIVSYDTGLYRVIYEDGDCEELESGDLRRLIISDSYLDDELRVRRKKLDKLILKKEEKKKRNSPENKAVELPNQVNGVQARAVTNSEDGDSYSDSESSESGDKRGSDLEIEAPLVPPVDLPPSSGTIGIPEEAVAHLLSVYGFLRSFSFQLYICPFELNDFVGALYFSGPNSLLDAVHVALLRALKGHLERLSSSKSVLASKCLRCIDWSLLDVLTWPVYLVQYFTAMGHASGPQWNIFNKFVVEIEYYSLPIGMKLKILQILCDDIFDVADLRDEIDAREESEIGFDPDRVATGLLENVPRRVHPRFAKTSAYKEKEVTDSSTNESKDLDSRCTNGGSNEVSSDLDGNSDECRICGMDGTLLCCDGCPLAYHSRCIGVVKMYIPDGPWFCPECTINKKGPKIAHGTSLRGAVQFGMDPHGRLFLGTCNHLLVLNISVNGDAVVKYYNVNDISKVVLVLISASSHTLEYVEICKAITQYWDLPEGISLREGEIGLTQAKDREDGKVSEITKSDSANISNRSHTQTVFDLPTSTLGNTNSAVTGGSCGIQGKKLAARVTYLGLSFKPNTYNNHYTNGELAVSAAASLAVLSSEETHEPDLRKYNSAKKAASSNILEQMKAFSLVAPRFFWPSPDKKEITRERCGWCHSCRLTSASRRGCMLNAAVAGATKGAMKIFSGLFPLKNGEGVLSSIAAYILYLEESLRGLIAGPFLSESPRKQWRKQVEEASTCKALKAPLLELEENICSIALSCDWFKQMDDWLIEHSIFQSAPVTLGVPQRRGPGRTKQNTQAEVTAEGSDADSFTWWRGGKLSKVILLKAVLSQPATKKAAWQGGSKKIPGLNYGDASYIPRRSRRSFWKAAVESSKNISQLALQVRYLDMSLRWRELVRPDQNLQNVKGPETDVAIFRNARICDKKLSDNKVSYGVFFGNQKHLPSRVMKNIMEVEKTQDRNEKYWLQEAHVPLYLIKEFEESLHRVQMPSSTKKPSKKLSKLQRKQLKASLMDIFSYIASRRDKMEKCSCASCDHDVLLRDTTTCSSCHGFCHKDCTSMSQHTNGNVEVLVTCKRCYLSKTRVPTNINHRQSTAPQFTINVRHQNAVIPVIKVKPPSQQLSSQKPRENTSGVKQVTPDSSVSKSKQKTLSCGVIWRKKNVEDTGVDFRNQNILLAGRSDKPSLEPVCGICLLPYNPGLTYIHCTKCEKWFHTEAVKLKDSQIPEVVGFKCCKCRRIRSPDCPYMDPKLKEQKQIKRIVFTNQKQRQGNSGLDSDSERMSEQKDSKPSTPLPATPLYPPDDVFIPEDDPLLVSVSKVKQITPSSFDLEWSTTAFAPGPQKLPVRRQVKREDSDAAYPELHPIVKPEAEEQALPVLTEWDLSGELLFDYEDMEFEPQTYFSLTELLTADDSGGGQYQENGDMVVSGNPQFEPTEKEECEDDMGPCQRCLQMDPAPDLLCTVCGLLIHSHCSPWSALPGSSWSCGQCRIRALGSITLGSFGAITQFKSILPDRSTKVDISLAGPFAGAALSVSMFAVGLFLSTEPDAANDLVQVPSMLFQGSLLLGLISRATLGYAALHAATVSIHPLVIAGWCGLTTTAFNMLPVGCLDGGRAVQGAFGKNALVTFGLSTYVMLGLRVLGGPLALPWGLYVLICRNT.

The segment covering Met1–Gln16 has biased composition (basic residues). 2 disordered regions span residues Met1–Asn27 and Val144–Asp168. A Nuclear localization signal motif is present at residues Arg9–Leu18. The segment covering Glu148–Glu160 has biased composition (acidic residues). The region spanning Glu192–Arg252 is the DDT domain. The segment covering Tyr375 to Ser393 has biased composition (basic and acidic residues). The tract at residues Tyr375–Asp408 is disordered. Residues Arg394 to Asp408 show a composition bias toward polar residues. Residues Ser411–Asn458 form a PHD-type 1 zinc finger. 2 disordered regions span residues Lys1165 to Lys1194 and Thr1311 to Pro1345. Composition is skewed to polar residues over residues Pro1167–Lys1194 and Thr1311–Asp1323. Residues Asp1325–Lys1336 show a composition bias toward basic and acidic residues. 5 helical membrane-spanning segments follow: residues Ala1539–Pro1559, Leu1569–Leu1589, Ala1596–Ile1616, Ala1624–Leu1644, and Met1682–Ile1702.

As to quaternary structure, interacts (via the DDT domain) with CHR11 (via C-terminus).

Its subcellular location is the plastid. The protein resides in the chloroplast outer membrane. The protein localises to the nucleus. Membrane-bound transcription factor required for the plastid-to-nucleus retrograde signaling. Functions in multiple retrograde pathways. The plastid-to-nucleus signal plays an important role in the coordinated expression of both nuclear- and chloroplast-localized genes that encode photosynthesis-related proteins. In the nucleus, activates ABI4 transcription in a PHD-dependent manner associated with histone modifications. Localized primarily in the chloroplast outer membrane as dormant form and, in response to retrograde signals, is released from the membrane through proteolytic cleavage and its cleaved fragment containing the transcription factor domain is redistributed to the nucleus, where it regulates the expression of particular nuclear genes. The polypeptide is DDT domain-containing protein PTM (Arabidopsis thaliana (Mouse-ear cress)).